A 353-amino-acid polypeptide reads, in one-letter code: Pleckstrin-2 (353 aa).

An N-acetylmethionine modification is found at M1. The PH 1 domain maps to 4–104 (GVLKEGFLVK…WAFEITGAIH (101 aa)). S120 is modified (phosphoserine). The DEP domain occupies 139 to 225 (TSTGIRPSPN…DSTALYTFAE (87 aa)). The 107-residue stretch at 247–353 (TVVKQGYLSK…EWIEAIKKLT (107 aa)) folds into the PH 2 domain.

As to expression, ubiquitous. Most abundant in the thymus, large bowel, small bowel, stomach, and prostate.

The protein resides in the cell projection. Its subcellular location is the lamellipodium membrane. It localises to the cytoplasm. It is found in the cytoskeleton. Its function is as follows. May help orchestrate cytoskeletal arrangement. Contribute to lamellipodia formation. Overexpression of pleckstrin 2 causes large lamellipodia and peripheral ruffle formation. The chain is Pleckstrin-2 (Plek2) from Mus musculus (Mouse).